A 1048-amino-acid polypeptide reads, in one-letter code: PH and SEC7 domain-containing protein 3 (1048 aa).

A compositionally biased stretch (basic and acidic residues) spans Ser36–Asp45. The tract at residues Ser36–Thr57 is disordered. A Phosphoserine modification is found at Ser76. 4 disordered regions span residues Leu104–Gln126, Gly310–Arg342, Ser364–Arg383, and Gln395–Thr434. Residues Gly311 to Asp321 show a composition bias toward basic and acidic residues. The span at Asn397–Gly423 shows a compositional bias: basic and acidic residues. The 201-residue stretch at Thr534–Glu734 folds into the SEC7 domain. Residues Asp741–Asn758 are compositionally biased toward basic and acidic residues. Positions Asp741 to Gly769 are disordered. Phosphoserine is present on Ser770. Residues Ala785–Ala898 form the PH domain. Residues Ala922–Ser952 are a coiled coil. A disordered region spans residues Asp999–Thr1048. 5 positions are modified to phosphoserine: Ser1009, Ser1011, Ser1012, Ser1014, and Ser1020. The span at Ser1011–Ile1022 shows a compositional bias: polar residues. Basic and acidic residues predominate over residues Asn1029–Glu1039.

Isoform 2 is expressed in epididymis (at protein level).

The protein localises to the cell membrane. It localises to the cell projection. Its subcellular location is the ruffle membrane. The protein resides in the postsynaptic density. Its function is as follows. Guanine nucleotide exchange factor for ARF6. This chain is PH and SEC7 domain-containing protein 3 (PSD3), found in Homo sapiens (Human).